A 104-amino-acid polypeptide reads, in one-letter code: Glutaredoxin (104 aa).

The Glutaredoxin domain maps to 3-103; the sequence is MIKAQELVSS…PLLTEAGAVK (101 aa). The cysteines at positions 23 and 26 are disulfide-linked.

Belongs to the glutaredoxin family. CPYC subfamily.

Its subcellular location is the cytoplasm. Has a glutathione-disulfide oxidoreductase activity in the presence of NADPH and glutathione reductase. Reduces low molecular weight disulfides and proteins. The protein is Glutaredoxin of Vernicia fordii (Tung).